Here is a 370-residue protein sequence, read N- to C-terminus: tRNA-specific 2-thiouridylase MnmA (370 aa).

ATP contacts are provided by residues 19 to 26 (AMSGGVDS) and Leu45. Cys113 acts as the Nucleophile in catalysis. Cysteines 113 and 209 form a disulfide. Gly137 contacts ATP. An interaction with tRNA region spans residues 159–161 (RDQ). The active-site Cysteine persulfide intermediate is Cys209.

Belongs to the MnmA/TRMU family.

The protein resides in the cytoplasm. The catalysed reaction is S-sulfanyl-L-cysteinyl-[protein] + uridine(34) in tRNA + AH2 + ATP = 2-thiouridine(34) in tRNA + L-cysteinyl-[protein] + A + AMP + diphosphate + H(+). In terms of biological role, catalyzes the 2-thiolation of uridine at the wobble position (U34) of tRNA, leading to the formation of s(2)U34. The protein is tRNA-specific 2-thiouridylase MnmA of Zymomonas mobilis subsp. mobilis (strain ATCC 31821 / ZM4 / CP4).